Consider the following 351-residue polypeptide: Glycerol-3-phosphate dehydrogenase [NAD(P)+] (351 aa).

NADPH-binding residues include S18, W19, R38, and K122. Sn-glycerol 3-phosphate is bound by residues K122, G153, and S155. A157 is a binding site for NADPH. The sn-glycerol 3-phosphate site is built by K208, D261, S271, R272, and N273. The Proton acceptor role is filled by K208. Residue R272 coordinates NADPH. E297 contributes to the NADPH binding site.

It belongs to the NAD-dependent glycerol-3-phosphate dehydrogenase family.

It is found in the cytoplasm. It carries out the reaction sn-glycerol 3-phosphate + NAD(+) = dihydroxyacetone phosphate + NADH + H(+). The catalysed reaction is sn-glycerol 3-phosphate + NADP(+) = dihydroxyacetone phosphate + NADPH + H(+). The protein operates within membrane lipid metabolism; glycerophospholipid metabolism. Its function is as follows. Catalyzes the reduction of the glycolytic intermediate dihydroxyacetone phosphate (DHAP) to sn-glycerol 3-phosphate (G3P), the key precursor for phospholipid synthesis. The chain is Glycerol-3-phosphate dehydrogenase [NAD(P)+] from Bordetella bronchiseptica (strain ATCC BAA-588 / NCTC 13252 / RB50) (Alcaligenes bronchisepticus).